The primary structure comprises 197 residues: Phosphoheptose isomerase (197 aa).

The SIS domain occupies 37 to 197; that stretch reads MLQCLMNDGK…CIDSVLLEGM (161 aa). A substrate-binding site is contributed by 52-54; the sequence is NGG. Residues His61 and Glu65 each contribute to the Zn(2+) site. Residues Glu65, 94-95, 120-122, Ser125, and Gln175 contribute to the substrate site; these read ND and STS. Zn(2+)-binding residues include Gln175 and His183.

Belongs to the SIS family. GmhA subfamily. Homotetramer. It depends on Zn(2+) as a cofactor.

It is found in the cytoplasm. The enzyme catalyses 2 D-sedoheptulose 7-phosphate = D-glycero-alpha-D-manno-heptose 7-phosphate + D-glycero-beta-D-manno-heptose 7-phosphate. It functions in the pathway carbohydrate biosynthesis; D-glycero-D-manno-heptose 7-phosphate biosynthesis; D-glycero-alpha-D-manno-heptose 7-phosphate and D-glycero-beta-D-manno-heptose 7-phosphate from sedoheptulose 7-phosphate: step 1/1. Catalyzes the isomerization of sedoheptulose 7-phosphate in D-glycero-D-manno-heptose 7-phosphate. This chain is Phosphoheptose isomerase, found in Neisseria gonorrhoeae (strain ATCC 700825 / FA 1090).